The sequence spans 313 residues: Methionyl-tRNA formyltransferase (313 aa).

Position 109 to 112 (109 to 112 (SLLP)) interacts with (6S)-5,6,7,8-tetrahydrofolate.

Belongs to the Fmt family.

The enzyme catalyses L-methionyl-tRNA(fMet) + (6R)-10-formyltetrahydrofolate = N-formyl-L-methionyl-tRNA(fMet) + (6S)-5,6,7,8-tetrahydrofolate + H(+). Its function is as follows. Attaches a formyl group to the free amino group of methionyl-tRNA(fMet). The formyl group appears to play a dual role in the initiator identity of N-formylmethionyl-tRNA by promoting its recognition by IF2 and preventing the misappropriation of this tRNA by the elongation apparatus. This Thermotoga neapolitana (strain ATCC 49049 / DSM 4359 / NBRC 107923 / NS-E) protein is Methionyl-tRNA formyltransferase.